A 331-amino-acid polypeptide reads, in one-letter code: Bifunctional nuclease 1 (331 aa).

Residues 126 to 261 (CVQNNPRVLR…RIAYNNGLKV (136 aa)) form the BFN domain. In terms of domain architecture, UVR spans 291–326 (EAQEFDLVRNMLVAAVEERYKDAAQYRDQLFMFRAK).

This sequence belongs to the bifunctional nuclease family.

It localises to the nucleus. In terms of biological role, bifunctional nuclease with both RNase and DNase activities. Involved in basal defense response. Participates in abscisic acid-derived callose deposition following infection by a necrotrophic pathogen. The chain is Bifunctional nuclease 1 (BBD1) from Oryza sativa subsp. indica (Rice).